We begin with the raw amino-acid sequence, 228 residues long: Urease accessory protein UreF (228 aa).

Belongs to the UreF family. As to quaternary structure, ureD, UreF and UreG form a complex that acts as a GTP-hydrolysis-dependent molecular chaperone, activating the urease apoprotein by helping to assemble the nickel containing metallocenter of UreC. The UreE protein probably delivers the nickel.

The protein resides in the cytoplasm. In terms of biological role, required for maturation of urease via the functional incorporation of the urease nickel metallocenter. The protein is Urease accessory protein UreF of Photorhabdus laumondii subsp. laumondii (strain DSM 15139 / CIP 105565 / TT01) (Photorhabdus luminescens subsp. laumondii).